An 882-amino-acid polypeptide reads, in one-letter code: Valine--tRNA ligase (882 aa).

A 'HIGH' region motif is present at residues 45 to 55 (PNVTGKLHLGH). The 'KMSKS' region signature appears at 519–523 (KMSKS). Residue lysine 522 participates in ATP binding. The stretch at 808-877 (LADLLNVEEE…DATQERIVEM (70 aa)) forms a coiled coil.

The protein belongs to the class-I aminoacyl-tRNA synthetase family. ValS type 1 subfamily. In terms of assembly, monomer.

Its subcellular location is the cytoplasm. It carries out the reaction tRNA(Val) + L-valine + ATP = L-valyl-tRNA(Val) + AMP + diphosphate. In terms of biological role, catalyzes the attachment of valine to tRNA(Val). As ValRS can inadvertently accommodate and process structurally similar amino acids such as threonine, to avoid such errors, it has a 'posttransfer' editing activity that hydrolyzes mischarged Thr-tRNA(Val) in a tRNA-dependent manner. In Streptococcus pyogenes serotype M6 (strain ATCC BAA-946 / MGAS10394), this protein is Valine--tRNA ligase.